A 252-amino-acid polypeptide reads, in one-letter code: Trans-aconitate 2-methyltransferase (252 aa).

The protein belongs to the methyltransferase superfamily. Tam family.

The protein localises to the cytoplasm. The catalysed reaction is trans-aconitate + S-adenosyl-L-methionine = (E)-3-(methoxycarbonyl)pent-2-enedioate + S-adenosyl-L-homocysteine. Functionally, catalyzes the S-adenosylmethionine monomethyl esterification of trans-aconitate. The protein is Trans-aconitate 2-methyltransferase of Escherichia fergusonii (strain ATCC 35469 / DSM 13698 / CCUG 18766 / IAM 14443 / JCM 21226 / LMG 7866 / NBRC 102419 / NCTC 12128 / CDC 0568-73).